A 248-amino-acid polypeptide reads, in one-letter code: DNA repair protein RecO (248 aa).

It belongs to the RecO family.

Its function is as follows. Involved in DNA repair and RecF pathway recombination. This chain is DNA repair protein RecO, found in Bradyrhizobium sp. (strain ORS 278).